We begin with the raw amino-acid sequence, 586 residues long: Pyruvate kinase (586 aa).

Substrate is bound at residue R32. Positions 34, 36, 66, and 67 each coordinate K(+). 34–37 (NFSH) lines the ATP pocket. Positions 73 and 156 each coordinate ATP. E222 provides a ligand contact to Mg(2+). 3 residues coordinate substrate: G245, D246, and T278. Mg(2+) is bound at residue D246.

The protein belongs to the pyruvate kinase family. This sequence in the C-terminal section; belongs to the PEP-utilizing enzyme family. It depends on Mg(2+) as a cofactor. Requires K(+) as cofactor.

The catalysed reaction is pyruvate + ATP = phosphoenolpyruvate + ADP + H(+). It functions in the pathway carbohydrate degradation; glycolysis; pyruvate from D-glyceraldehyde 3-phosphate: step 5/5. The polypeptide is Pyruvate kinase (pyk) (Staphylococcus haemolyticus (strain JCSC1435)).